The primary structure comprises 591 residues: CTP synthase (591 aa).

The amidoligase domain stretch occupies residues Met-1–Leu-281. Ser-23 lines the CTP pocket. Ser-23 provides a ligand contact to UTP. ATP contacts are provided by residues Ser-24 to Leu-29 and Asp-81. Positions 81 and 155 each coordinate Mg(2+). Residues Asp-162–Glu-164, Lys-202–Gln-207, and Lys-238 each bind CTP. UTP-binding positions include Lys-202–Gln-207 and Lys-238. The region spanning Arg-306–Glu-554 is the Glutamine amidotransferase type-1 domain. Residue Gly-369 participates in L-glutamine binding. Residue Cys-396 is the Nucleophile; for glutamine hydrolysis of the active site. L-glutamine contacts are provided by residues Leu-397 to Gln-400, Glu-419, and Arg-480. Active-site residues include His-527 and Glu-529. The tract at residues Ala-568–Gly-591 is disordered.

This sequence belongs to the CTP synthase family. Homotetramer.

It catalyses the reaction UTP + L-glutamine + ATP + H2O = CTP + L-glutamate + ADP + phosphate + 2 H(+). The catalysed reaction is L-glutamine + H2O = L-glutamate + NH4(+). It carries out the reaction UTP + NH4(+) + ATP = CTP + ADP + phosphate + 2 H(+). The protein operates within pyrimidine metabolism; CTP biosynthesis via de novo pathway; CTP from UDP: step 2/2. With respect to regulation, allosterically activated by GTP, when glutamine is the substrate; GTP has no effect on the reaction when ammonia is the substrate. The allosteric effector GTP functions by stabilizing the protein conformation that binds the tetrahedral intermediate(s) formed during glutamine hydrolysis. Inhibited by the product CTP, via allosteric rather than competitive inhibition. In terms of biological role, catalyzes the ATP-dependent amination of UTP to CTP with either L-glutamine or ammonia as the source of nitrogen. Regulates intracellular CTP levels through interactions with the four ribonucleotide triphosphates. In Rhodococcus jostii (strain RHA1), this protein is CTP synthase.